The chain runs to 253 residues: Protein phosphatase CheZ (253 aa).

Positions 1 to 84 are disordered; the sequence is MTQEELDALM…EWPPPPPTEE (84 aa). Basic and acidic residues predominate over residues 21-69; that stretch reads LETKEETKEEAKEEAKEEAKEEAKEKEEIKEESSSQKMTVKKEDAEKYG.

Belongs to the CheZ family. Interacts with ChePep; this interaction is essential for each other polar localization.

It localises to the cytoplasm. Plays an important role in bacterial chemotaxis signal transduction pathway by accelerating the dephosphorylation of phosphorylated CheY (CheY-P). Also dephosphorylates CheV2 but not CheV1 or CheV3. In addition, forms a distinct chemotaxis regulatory complex with ChePep independently of the core chemotaxis signaling proteins. This Helicobacter pylori (strain ATCC 700392 / 26695) (Campylobacter pylori) protein is Protein phosphatase CheZ.